A 417-amino-acid polypeptide reads, in one-letter code: NADH-quinone oxidoreductase subunit D (417 aa).

The protein belongs to the complex I 49 kDa subunit family. In terms of assembly, NDH-1 is composed of 14 different subunits. Subunits NuoB, C, D, E, F, and G constitute the peripheral sector of the complex.

It is found in the cell inner membrane. It carries out the reaction a quinone + NADH + 5 H(+)(in) = a quinol + NAD(+) + 4 H(+)(out). In terms of biological role, NDH-1 shuttles electrons from NADH, via FMN and iron-sulfur (Fe-S) centers, to quinones in the respiratory chain. The immediate electron acceptor for the enzyme in this species is believed to be ubiquinone. Couples the redox reaction to proton translocation (for every two electrons transferred, four hydrogen ions are translocated across the cytoplasmic membrane), and thus conserves the redox energy in a proton gradient. This is NADH-quinone oxidoreductase subunit D from Aromatoleum aromaticum (strain DSM 19018 / LMG 30748 / EbN1) (Azoarcus sp. (strain EbN1)).